The primary structure comprises 103 residues: Putative RNA-binding protein RbpB (103 aa).

Residues 2–79 (SIYVGNLSYD…RDLKVNKAKP (78 aa)) enclose the RRM domain. Over residues 74 to 85 (VNKAKPREDRGG) the composition is skewed to basic and acidic residues. A disordered region spans residues 74 to 103 (VNKAKPREDRGGSRGSFGGNRSNNNFRNRY). Residues 92–103 (GNRSNNNFRNRY) are compositionally biased toward low complexity.

The sequence is that of Putative RNA-binding protein RbpB (rbpB) from Nostoc sp. (strain PCC 7120 / SAG 25.82 / UTEX 2576).